The primary structure comprises 605 residues: Alpha-fetoprotein (605 aa).

Positions 1–18 are cleaved as a signal peptide; sequence MKWITPASLILLLHFAAS. Albumin domains lie at 19-207, 208-398, and 399-597; these read KALH…SIAK, ELRE…EELQ, and KHIE…KLIS. Disulfide bonds link C95–C110, C109–C120, C144–C189, C188–C197, C220–C266, C265–C273, C285–C299, and C298–C309. Phosphoserine occurs at positions 107, 111, and 113. N-linked (GlcNAc...) asparagine glycosylation is present at N247. S340 bears the Phosphoserine mark. 7 cysteine pairs are disulfide-bonded: C380–C389, C412–C458, C457–C468, C481–C497, C496–C507, C534–C579, and C578–C587. The residue at position 440 (S440) is a Phosphoserine. N498 carries N-linked (GlcNAc...) asparagine glycosylation.

It belongs to the ALB/AFP/VDB family. Post-translationally, glycosylated; contains two glycans. In terms of processing, sulfated. Plasma.

The protein resides in the secreted. Binds estrogens, fatty acids and metals. The chain is Alpha-fetoprotein (Afp) from Mus musculus (Mouse).